The primary structure comprises 443 residues: MIKERKTELVEGFRHSVPYINTHRGKTFVIMLGGEAIEHDNFSSIVSDIGLLHSLGIRLVVVYGARPQIDANLAAHHHEPIYHKNTRVTDAKTLELVKQAAGLLQLDITARLSMSLNNTPLQGAHINVVSGNFTIAQPLGVDDGVDYCHSGRIRRIDEDAINRQLDNGAIVLMGPVAVSVTGESFNLTSEEIATQLAVKLKAEKMIGFCSSQGVTNSEGGIISELFPNEAQARVEELEAQGDYNSGTVRFLRGAVKACRSGVRRCHLISYQEDGSLLQELFSRDGIGTQIVMESAEQIRRATINDIGGILELIRPLEQQGILVRRSREQLEMEIDKFTIIQRDNMTIACAALYPFVEEKIGEMACVAVHPDYRSSSRGEVLLERVAAQARQMGLRKLFVLTTRSIHWFQERGFTPVDIELLPESKKKMYNYQRRSKVLMADLG.

One can recognise an N-acetyltransferase domain in the interval 296-443 (EQIRRATIND…RSKVLMADLG (148 aa)).

The protein belongs to the acetyltransferase family. ArgA subfamily. As to quaternary structure, homohexamer.

The protein localises to the cytoplasm. The enzyme catalyses L-glutamate + acetyl-CoA = N-acetyl-L-glutamate + CoA + H(+). Its pathway is amino-acid biosynthesis; L-arginine biosynthesis; N(2)-acetyl-L-ornithine from L-glutamate: step 1/4. In Salmonella typhi, this protein is Amino-acid acetyltransferase (argA).